Reading from the N-terminus, the 400-residue chain is Phosphoglycerate kinase (400 aa).

Residues 21–23, arginine 37, 60–63, arginine 119, and arginine 152 contribute to the substrate site; these read DFN and HFGR. ATP contacts are provided by residues lysine 205, glycine 296, glutamate 327, and 353 to 356; that span reads GGDT.

Belongs to the phosphoglycerate kinase family. In terms of assembly, monomer.

The protein localises to the cytoplasm. It carries out the reaction (2R)-3-phosphoglycerate + ATP = (2R)-3-phospho-glyceroyl phosphate + ADP. The protein operates within carbohydrate degradation; glycolysis; pyruvate from D-glyceraldehyde 3-phosphate: step 2/5. The sequence is that of Phosphoglycerate kinase from Aliarcobacter butzleri (strain RM4018) (Arcobacter butzleri).